A 417-amino-acid chain; its full sequence is Xylulose 5-phosphate/phosphate translocator, chloroplastic (417 aa).

A chloroplast-targeting transit peptide spans 1 to 82; the sequence is MISLNLSPSL…GFSRKPRSIA (82 aa). A disordered region spans residues 66–102; sequence TNPESSSGFSRKPRSIAAVGSSDSNPDEKSDLGEAEK. An N-acetylalanine modification is found at alanine 83. Basic and acidic residues predominate over residues 91–102; it reads PDEKSDLGEAEK. Helical transmembrane passes span 109-129, 141-161, 173-193, 198-218, 225-245, 247-267, 287-307, 318-338, and 384-404; these read TLQL…FNIF, WLLA…LWSF, FIIA…SACV, VAVS…VIFS, YPLA…LAAV, EVSF…GFVL, LYGC…IFVE, AIAS…SGVF, and LNAL…QATA. Residues 127-243 form the EamA domain; it reads NIFNKKALNV…LPIVMGCSLA (117 aa).

Belongs to the TPT transporter family. TPT (TC 2.A.7.9) subfamily. Widely expressed.

It is found in the plastid. The protein localises to the chloroplast membrane. Its function is as follows. Sugar phosphate/phosphate translocator that transports inorganic phosphate, triose phosphate, 3-phosphoglycerate, xylulose 5-phosphate (Xul-5-P) and to a lesser extent ribulose 5-phosphate. Does not transport ribose 5-phosphate or hexose phosphates. Provides cytosolic Xul-5-P to the chloroplast, where it is used as an intermediate in the plastidic pentose phosphate pathways. This is Xylulose 5-phosphate/phosphate translocator, chloroplastic (XPT) from Arabidopsis thaliana (Mouse-ear cress).